A 214-amino-acid chain; its full sequence is UPF0502 protein Spro_2794 (214 aa).

It belongs to the UPF0502 family.

In Serratia proteamaculans (strain 568), this protein is UPF0502 protein Spro_2794.